Here is a 251-residue protein sequence, read N- to C-terminus: 2,3-bisphosphoglycerate-dependent phosphoglycerate mutase (251 aa).

Substrate contacts are provided by residues 8 to 15, 21 to 22, R60, 87 to 90, K98, 114 to 115, and 183 to 184; these read RHGESLWN, TG, ERHY, RR, and GN. The Tele-phosphohistidine intermediate role is filled by H9. E87 acts as the Proton donor/acceptor in catalysis.

The protein belongs to the phosphoglycerate mutase family. BPG-dependent PGAM subfamily.

The catalysed reaction is (2R)-2-phosphoglycerate = (2R)-3-phosphoglycerate. The protein operates within carbohydrate degradation; glycolysis; pyruvate from D-glyceraldehyde 3-phosphate: step 3/5. Functionally, catalyzes the interconversion of 2-phosphoglycerate and 3-phosphoglycerate. The polypeptide is 2,3-bisphosphoglycerate-dependent phosphoglycerate mutase (Thermoanaerobacter pseudethanolicus (strain ATCC 33223 / 39E) (Clostridium thermohydrosulfuricum)).